A 644-amino-acid polypeptide reads, in one-letter code: 1-deoxy-D-xylulose-5-phosphate synthase (644 aa).

Residues His72 and 113 to 115 (GHA) contribute to the thiamine diphosphate site. Mg(2+) is bound at residue Asp144. Thiamine diphosphate is bound by residues 145-146 (GA), Asn174, Tyr287, and Glu370. Asn174 is a binding site for Mg(2+).

It belongs to the transketolase family. DXPS subfamily. Homodimer. Mg(2+) serves as cofactor. Thiamine diphosphate is required as a cofactor.

The catalysed reaction is D-glyceraldehyde 3-phosphate + pyruvate + H(+) = 1-deoxy-D-xylulose 5-phosphate + CO2. It functions in the pathway metabolic intermediate biosynthesis; 1-deoxy-D-xylulose 5-phosphate biosynthesis; 1-deoxy-D-xylulose 5-phosphate from D-glyceraldehyde 3-phosphate and pyruvate: step 1/1. Catalyzes the acyloin condensation reaction between C atoms 2 and 3 of pyruvate and glyceraldehyde 3-phosphate to yield 1-deoxy-D-xylulose-5-phosphate (DXP). This chain is 1-deoxy-D-xylulose-5-phosphate synthase, found in Prochlorococcus marinus (strain MIT 9303).